The following is a 324-amino-acid chain: Glutathione synthetase (324 aa).

The ATP-grasp domain occupies 129 to 313 (KLYALHFPDL…LEDEIVDWLV (185 aa)). 155–211 (VDIHGRAVIKPLDGKGGEGIFLLARADRNLNAIIEASTAYGTRHVMVQRYLEESRQG) is a binding site for ATP. Mg(2+) contacts are provided by Glu-284 and Asn-286.

The protein belongs to the prokaryotic GSH synthase family. The cofactor is Mg(2+). It depends on Mn(2+) as a cofactor.

The enzyme catalyses gamma-L-glutamyl-L-cysteine + glycine + ATP = glutathione + ADP + phosphate + H(+). The protein operates within sulfur metabolism; glutathione biosynthesis; glutathione from L-cysteine and L-glutamate: step 2/2. The chain is Glutathione synthetase from Gloeobacter violaceus (strain ATCC 29082 / PCC 7421).